Here is a 389-residue protein sequence, read N- to C-terminus: Succinate--CoA ligase [ADP-forming] subunit beta (389 aa).

An ATP-grasp domain is found at 9–236 (KELFASHGVP…KDAEDPLEAK (228 aa)). Residues Lys-45, 52 to 54 (GRG), Ser-94, and Glu-99 contribute to the ATP site. The Mg(2+) site is built by Asn-191 and Asp-205. Residues Asn-256 and 318–320 (GIT) each bind substrate.

This sequence belongs to the succinate/malate CoA ligase beta subunit family. As to quaternary structure, heterotetramer of two alpha and two beta subunits. Mg(2+) is required as a cofactor.

The enzyme catalyses succinate + ATP + CoA = succinyl-CoA + ADP + phosphate. It carries out the reaction GTP + succinate + CoA = succinyl-CoA + GDP + phosphate. Its pathway is carbohydrate metabolism; tricarboxylic acid cycle; succinate from succinyl-CoA (ligase route): step 1/1. In terms of biological role, succinyl-CoA synthetase functions in the citric acid cycle (TCA), coupling the hydrolysis of succinyl-CoA to the synthesis of either ATP or GTP and thus represents the only step of substrate-level phosphorylation in the TCA. The beta subunit provides nucleotide specificity of the enzyme and binds the substrate succinate, while the binding sites for coenzyme A and phosphate are found in the alpha subunit. The sequence is that of Succinate--CoA ligase [ADP-forming] subunit beta from Saccharopolyspora erythraea (strain ATCC 11635 / DSM 40517 / JCM 4748 / NBRC 13426 / NCIMB 8594 / NRRL 2338).